A 240-amino-acid chain; its full sequence is Protein unc-119 homolog A (240 aa).

Positions 1 to 12 are enriched in gly residues; the sequence is MKVKKGGGGTGP. Residues 1 to 62 are disordered; it reads MKVKKGGGGT…PLQGKQPIGP (62 aa). Residues serine 37, serine 39, and serine 41 each carry the phosphoserine; by CK2 modification. Tyrosine 131 is a tetradecanoate binding site.

The protein belongs to the PDE6D/unc-119 family. In terms of assembly, interacts with CABP4; in the absence of calcium. May interact with GTP-bound ARL1. Interacts with ARL2 and ARL3 (GTP-bound forms); this promotes the release of myristoylated cargo proteins. Found in a complex with ARL3, RP2 and UNC119; RP2 induces hydrolysis of GTP ARL3 in the complex, leading to the release of UNC119. Interacts with NPHP3 (when myristoylated). Interacts with CYS1 (when myristoylated). Interacts with MACIR; interaction only takes place when UNC119 is not liganded with myristoylated proteins. Interacts with ARL1 and ARL3 GTP-bound forms. Interacts with ARL2. Interacts with ARL2. Interacts with LCK; this interaction plays a crucial role in activation of LCK. Interacts with FYN. Interacts with RAB11A; in a cell cycle-dependent manner. Interacts with LYN (via SH2 and SH3 domains); leading to LYN activation. Interacts with DNM1; leading to a decrease of DNM1 GTPase activity. Found in a complex with ABL1, ABL2, CRK and UNC119; leading to the inhibition of CRK phosphorylation by ABL kinases. Interacts with CD44. Interacts with KLHL18 (via kelch repeats). Interacts with PPP3CA, PPP3CB and PPP3CC. Interacts with USP48; this interaction promotes UNC119 stability. In terms of processing, phosphorylation suppresses its interaction with KLHL18 and down-regulates its KLHL18-mediated degradation. Phosphorylated more under light conditions than dark conditions. Dephosphorylated by calcineurin.

Its subcellular location is the cytoplasm. The protein resides in the cytoskeleton. The protein localises to the microtubule organizing center. It localises to the centrosome. It is found in the spindle. Its subcellular location is the spindle pole. In terms of biological role, involved in synaptic functions in photoreceptor cells, the signal transduction in immune cells as a Src family kinase activator, endosome recycling, the uptake of bacteria and endocytosis, protein trafficking in sensory neurons and as lipid-binding chaperone with specificity for a diverse subset of myristoylated proteins. Specifically binds the myristoyl moiety of a subset of N-terminally myristoylated proteins and is required for their localization. Binds myristoylated GNAT1 and is required for G-protein localization and trafficking in sensory neurons. Probably plays a role in trafficking proteins in photoreceptor cells. Plays important roles in mediating Src family kinase signals for the completion of cytokinesis via RAB11A. The protein is Protein unc-119 homolog A (Unc119) of Rattus norvegicus (Rat).